A 275-amino-acid polypeptide reads, in one-letter code: Translation initiation factor 2 subunit alpha (275 aa).

The region spanning 12–83 (GEFVVATVKN…EKGHIDLSLK (72 aa)) is the S1 motif domain.

It belongs to the eIF-2-alpha family. In terms of assembly, heterotrimer composed of an alpha, a beta and a gamma chain.

Functionally, eIF-2 functions in the early steps of protein synthesis by forming a ternary complex with GTP and initiator tRNA. This Thermococcus kodakarensis (strain ATCC BAA-918 / JCM 12380 / KOD1) (Pyrococcus kodakaraensis (strain KOD1)) protein is Translation initiation factor 2 subunit alpha.